Consider the following 201-residue polypeptide: Large ribosomal subunit protein uL4 (201 aa).

The interval 39-70 is disordered; the sequence is GRQGTKAQKTRSEVSGGGKKPWRQKGTGRARA.

The protein belongs to the universal ribosomal protein uL4 family. As to quaternary structure, part of the 50S ribosomal subunit.

Functionally, one of the primary rRNA binding proteins, this protein initially binds near the 5'-end of the 23S rRNA. It is important during the early stages of 50S assembly. It makes multiple contacts with different domains of the 23S rRNA in the assembled 50S subunit and ribosome. Its function is as follows. Forms part of the polypeptide exit tunnel. The protein is Large ribosomal subunit protein uL4 of Marinobacter nauticus (strain ATCC 700491 / DSM 11845 / VT8) (Marinobacter aquaeolei).